We begin with the raw amino-acid sequence, 1007 residues long: Tolloid-like protein 1 (1007 aa).

The N-terminal stretch at 1-25 (MNMPSWLIFLLTGWTFCGNFFACGG) is a signal peptide. The propeptide occupies 26 to 142 (LDYDYPNYEN…GKSKKIRIPR (117 aa)). Positions 115–139 (SGQENTTANSQKVDNNQSGKSKKIR) are disordered. Polar residues predominate over residues 116-133 (GQENTTANSQKVDNNQSG). Residues 143–342 (AATSRTERIW…AQARKLYRCP (200 aa)) enclose the Peptidase M12A domain. N-linked (GlcNAc...) asparagine glycosylation occurs at Asn164. 4 disulfides stabilise this stretch: Cys185-Cys341, Cys205-Cys227, Cys207-Cys208, and Cys344-Cys370. Zn(2+) is bound at residue His235. Residue Glu236 is part of the active site. The Zn(2+) site is built by His239 and His245. CUB domains lie at 344 to 456 (CGET…YEAI) and 457 to 569 (CGGE…FLKE). Asn354 and Asn385 each carry an N-linked (GlcNAc...) asparagine glycan. Disulfide bonds link Cys397–Cys419, Cys457–Cys483, Cys510–Cys532, Cys573–Cys585, Cys581–Cys594, Cys596–Cys609, Cys613–Cys639, Cys666–Cys688, Cys729–Cys740, Cys736–Cys749, Cys751–Cys764, Cys769–Cys795, Cys822–Cys844, Cys882–Cys912, and Cys939–Cys961. In terms of domain architecture, EGF-like 1; calcium-binding spans 569 to 610 (EEDECARPDNGGCEQRCVNTLGSYKCSCDPGYELAPDKKSCE). The CUB 3 domain maps to 613-725 (CGGLLTKLNG…KGFRAHFFSD (113 aa)). Asn621 carries an N-linked (GlcNAc...) asparagine glycan. The 41-residue stretch at 725-765 (DKDECSKDNGGCQHECINTIGSYVCQCRNGFVLHDNKHDCK) folds into the EGF-like 2; calcium-binding domain. 2 consecutive CUB domains span residues 769-881 (CEHR…HSTE) and 882-998 (CGGR…YRSV).

Requires Zn(2+) as cofactor.

The protein localises to the secreted. Protease which processes procollagen C-propeptides, such as chordin. Required for the embryonic development. Predominant protease, which in the development, influences dorsal-ventral patterning and skeletogenesis. This chain is Tolloid-like protein 1 (tll1), found in Xenopus laevis (African clawed frog).